The following is a 48-amino-acid chain: Protein PsbN (48 aa).

The helical transmembrane segment at 12–34 threads the bilayer; sequence LLIAMVTITFGLTGYGLYTAFGP.

Belongs to the PsbN family.

The protein localises to the cellular thylakoid membrane. Its function is as follows. May play a role in photosystem I and II biogenesis. This is Protein PsbN from Prochlorococcus marinus (strain MIT 9313).